The sequence spans 175 residues: Translation initiation factor IF-3 (175 aa).

This sequence belongs to the IF-3 family. As to quaternary structure, monomer.

The protein resides in the cytoplasm. Its function is as follows. IF-3 binds to the 30S ribosomal subunit and shifts the equilibrium between 70S ribosomes and their 50S and 30S subunits in favor of the free subunits, thus enhancing the availability of 30S subunits on which protein synthesis initiation begins. In Aquifex aeolicus (strain VF5), this protein is Translation initiation factor IF-3.